The sequence spans 354 residues: MKVDPNKEKALAAVLSQIEKQFGKGSIMKLGEDRTMDVETISTGSLSLDIALGAGGLPMGRIVEIYGPESSGKTTLTLEVIAAAQREGKTCAFIDAEHALDPIYAKKLGVDIDNLLCSQPDTGEQALEICDALTRSGAVDVIVVDSVAALTPKAEIEGEIGDSHMGLAARMMSQAMRKLAGNLKQSNTLLIFINQIRMKIGVMFGSPETTTGGNALKFYASVRLDIRRTGAIKDGDEVVGNETRVKVVKNKIAAPFKQAEFQILYGQGINRTGELVDLGVAHKLVDKAGAWYSYKGEKIGQGRANAGKFLTENPVIASEINTTLRAMLLNGGANSSDSKTESDENIDLETGEVF.

67–74 (GPESSGKT) serves as a coordination point for ATP. The disordered stretch occupies residues 331–354 (GGANSSDSKTESDENIDLETGEVF). The segment covering 343–354 (DENIDLETGEVF) has biased composition (acidic residues).

Belongs to the RecA family.

Its subcellular location is the cytoplasm. Functionally, can catalyze the hydrolysis of ATP in the presence of single-stranded DNA, the ATP-dependent uptake of single-stranded DNA by duplex DNA, and the ATP-dependent hybridization of homologous single-stranded DNAs. It interacts with LexA causing its activation and leading to its autocatalytic cleavage. The chain is Protein RecA from Shewanella frigidimarina (strain NCIMB 400).